Consider the following 446-residue polypeptide: Phosphoglucosamine mutase (446 aa).

Catalysis depends on S101, which acts as the Phosphoserine intermediate. Mg(2+) is bound by residues S101, D240, D242, and D244. S101 is subject to Phosphoserine.

This sequence belongs to the phosphohexose mutase family. Requires Mg(2+) as cofactor. Activated by phosphorylation.

It carries out the reaction alpha-D-glucosamine 1-phosphate = D-glucosamine 6-phosphate. Catalyzes the conversion of glucosamine-6-phosphate to glucosamine-1-phosphate. The sequence is that of Phosphoglucosamine mutase from Pseudomonas putida (strain ATCC 700007 / DSM 6899 / JCM 31910 / BCRC 17059 / LMG 24140 / F1).